Here is a 388-residue protein sequence, read N- to C-terminus: Chorismate synthase (388 aa).

Arginine 39 and arginine 45 together coordinate NADP(+). Residues 132 to 134, 251 to 252, glycine 296, 311 to 315, and arginine 337 each bind FMN; these read RSS, NA, and KPIPT.

This sequence belongs to the chorismate synthase family. As to quaternary structure, homotetramer. FMNH2 is required as a cofactor.

It catalyses the reaction 5-O-(1-carboxyvinyl)-3-phosphoshikimate = chorismate + phosphate. It functions in the pathway metabolic intermediate biosynthesis; chorismate biosynthesis; chorismate from D-erythrose 4-phosphate and phosphoenolpyruvate: step 7/7. Its function is as follows. Catalyzes the anti-1,4-elimination of the C-3 phosphate and the C-6 proR hydrogen from 5-enolpyruvylshikimate-3-phosphate (EPSP) to yield chorismate, which is the branch point compound that serves as the starting substrate for the three terminal pathways of aromatic amino acid biosynthesis. This reaction introduces a second double bond into the aromatic ring system. This is Chorismate synthase from Staphylococcus haemolyticus (strain JCSC1435).